Here is a 274-residue protein sequence, read N- to C-terminus: Urease accessory protein UreD (274 aa).

This sequence belongs to the UreD family. As to quaternary structure, ureD, UreF and UreG form a complex that acts as a GTP-hydrolysis-dependent molecular chaperone, activating the urease apoprotein by helping to assemble the nickel containing metallocenter of UreC. The UreE protein probably delivers the nickel.

The protein resides in the cytoplasm. In terms of biological role, required for maturation of urease via the functional incorporation of the urease nickel metallocenter. This is Urease accessory protein UreD from Thermosynechococcus vestitus (strain NIES-2133 / IAM M-273 / BP-1).